Here is a 489-residue protein sequence, read N- to C-terminus: Dihydropyrimidinase 1 (489 aa).

Zn(2+) is bound by residues H61, H63, and K156. N6-carboxylysine is present on K156. Y161 is a substrate binding site. Zn(2+) is bound by residues H189 and H245. S295 provides a ligand contact to substrate. A Zn(2+)-binding site is contributed by D323. N344 contacts substrate.

Belongs to the metallo-dependent hydrolases superfamily. Hydantoinase/dihydropyrimidinase family. As to quaternary structure, homotetramer. The cofactor is Zn(2+). Carboxylation allows a single lysine to coordinate two zinc ions. As to expression, in L1-L2 larvae, expressed in body hypodermal cells, hemidesmosomes and in a neuronal cell between the pharynx and ring neuropil. In adults, expression is seen in body hypodermal cells and pharynx.

Its subcellular location is the nucleus. The catalysed reaction is 5,6-dihydrouracil + H2O = 3-(carbamoylamino)propanoate + H(+). In Caenorhabditis elegans, this protein is Dihydropyrimidinase 1 (dhp-1).